The primary structure comprises 432 residues: RNA binding protein fox-1 homolog 2 (432 aa).

Positions 1–21 (MAEGGQAQQQPPQLGPGAAAR) are enriched in low complexity. The tract at residues 1 to 169 (MAEGGQAQQQ…STPKRLHVSN (169 aa)) is disordered. Polar residues-rich tracts occupy residues 60 to 69 (QGNQEPTTTP) and 101 to 121 (YAGQ…PHGE). Positions 122 to 159 (QSSNSPSNQNGSLTQTEGGAQTDGQQSQTQSSENSESK) are enriched in low complexity. The RRM domain maps to 163–239 (KRLHVSNIPF…RKIEVNNATA (77 aa)). R323 is subject to Omega-N-methylarginine. 2 positions are modified to asymmetric dimethylarginine: R339 and R371. R423 and R428 each carry asymmetric dimethylarginine; alternate. An omega-N-methylarginine; alternate mark is found at R423 and R428.

In terms of assembly, interacts with ER-alpha N-terminal activation domain. Interacts with RBPMS; the interaction allows cooperative assembly of stable cell-specific alternative splicing regulatory complexes.

The protein resides in the nucleus. The protein localises to the cytoplasm. RNA-binding protein that regulates alternative splicing events by binding to 5'-UGCAUGU-3' elements. Prevents binding of U2AF2 to the 3'-splice site. Regulates alternative splicing of tissue-specific exons and of differentially spliced exons during erythropoiesis. Seems to act as a coregulatory factor of ER-alpha. Together with RNA binding proteins RBPMS and MBNL1/2, activates vascular smooth muscle cells alternative splicing events. The polypeptide is RNA binding protein fox-1 homolog 2 (Rbfox2) (Rattus norvegicus (Rat)).